Reading from the N-terminus, the 844-residue chain is Meiotically up-regulated gene 61 protein (844 aa).

Disordered stretches follow at residues 333 to 354 (ENNS…PQSQ) and 384 to 415 (NFGL…EISS). The span at 384–394 (NFGLEASNTST) shows a compositional bias: polar residues. A compositionally biased stretch (basic and acidic residues) spans 395 to 407 (PEKKKFDSQKPDD). The helical transmembrane segment at 459–479 (VVNSLWLVLLVVPLLGFVGFW) threads the bilayer. Residue 605-612 (AKNLNGKS) participates in ATP binding. A helical transmembrane segment spans residues 705–725 (VISCWRIYLLIGILAAITGTV).

Interacts with sad1.

It is found in the endoplasmic reticulum membrane. The protein resides in the nucleus membrane. Functionally, required for correct meiotic chromosome segregation. This Schizosaccharomyces pombe (strain 972 / ATCC 24843) (Fission yeast) protein is Meiotically up-regulated gene 61 protein (mug61).